Consider the following 147-residue polypeptide: uncharacterized protein (147 aa).

The next 2 membrane-spanning stretches (helical) occupy residues 41 to 61 (LANF…ALLI) and 67 to 87 (LLAA…SFPL).

The protein localises to the cell membrane. This is an uncharacterized protein from Pyrococcus horikoshii (strain ATCC 700860 / DSM 12428 / JCM 9974 / NBRC 100139 / OT-3).